A 451-amino-acid polypeptide reads, in one-letter code: Cindoxin reductase (451 aa).

FAD-binding residues include alanine 24, glutamate 45, leucine 53, and valine 89. Residues 157–160 (NGNV) and 197–198 (RS) each bind NADP(+). FAD-binding positions include tryptophan 338 and 345–347 (GGI). Glycine 345 is an NADP(+) binding site.

Belongs to the ferredoxin--NADP reductase type 1 family. The cofactor is FAD.

Its function is as follows. Involved in the degradation of cineol (eucalyptol). Catalyzes the reduction of cindoxin (CinC). In Citrobacter braakii, this protein is Cindoxin reductase (cinB).